Here is a 49-residue protein sequence, read N- to C-terminus: uncharacterized protein (49 aa).

This is an uncharacterized protein from Enterobacteria phage T3 (Bacteriophage T3).